Here is a 160-residue protein sequence, read N- to C-terminus: Transcription elongation factor GreA (160 aa).

A coiled-coil region spans residues 49–75 (SEYDEAKNDQAFTEGKILQLENKLKNA).

The protein belongs to the GreA/GreB family.

Its function is as follows. Necessary for efficient RNA polymerase transcription elongation past template-encoded arresting sites. The arresting sites in DNA have the property of trapping a certain fraction of elongating RNA polymerases that pass through, resulting in locked ternary complexes. Cleavage of the nascent transcript by cleavage factors such as GreA or GreB allows the resumption of elongation from the new 3'terminus. GreA releases sequences of 2 to 3 nucleotides. This is Transcription elongation factor GreA from Clostridium botulinum (strain Eklund 17B / Type B).